A 162-amino-acid polypeptide reads, in one-letter code: NADPH-dependent 7-cyano-7-deazaguanine reductase (162 aa).

Catalysis depends on Cys-53, which acts as the Thioimide intermediate. Asp-60 acts as the Proton donor in catalysis. Substrate-binding positions include 75–77 and 94–95; these read VES and HE.

The protein belongs to the GTP cyclohydrolase I family. QueF type 1 subfamily.

Its subcellular location is the cytoplasm. It catalyses the reaction 7-aminomethyl-7-carbaguanine + 2 NADP(+) = 7-cyano-7-deazaguanine + 2 NADPH + 3 H(+). It functions in the pathway tRNA modification; tRNA-queuosine biosynthesis. Functionally, catalyzes the NADPH-dependent reduction of 7-cyano-7-deazaguanine (preQ0) to 7-aminomethyl-7-deazaguanine (preQ1). The chain is NADPH-dependent 7-cyano-7-deazaguanine reductase from Streptococcus mutans serotype c (strain ATCC 700610 / UA159).